We begin with the raw amino-acid sequence, 349 residues long: D-alanine--D-alanine ligase (349 aa).

The ATP-grasp domain occupies 140 to 345; sequence NILFEAMGIP…MKDVFTWLLE (206 aa). Position 169–224 (169–224) interacts with ATP; sequence NLSFSYPVFIKPTLGGSSVNTGMAKTAEEAMTLVDKIFVTDDRVLVQKLVSGTEVS. Aspartate 300, glutamate 312, and asparagine 314 together coordinate Mg(2+).

Belongs to the D-alanine--D-alanine ligase family. Requires Mg(2+) as cofactor. It depends on Mn(2+) as a cofactor.

It is found in the cytoplasm. The catalysed reaction is 2 D-alanine + ATP = D-alanyl-D-alanine + ADP + phosphate + H(+). The protein operates within cell wall biogenesis; peptidoglycan biosynthesis. Functionally, cell wall formation. The chain is D-alanine--D-alanine ligase from Leptospira biflexa serovar Patoc (strain Patoc 1 / Ames).